A 304-amino-acid chain; its full sequence is Glutaminase (304 aa).

Residues S63, N114, E158, N165, Y189, Y240, and V258 each coordinate substrate.

Belongs to the glutaminase family. In terms of assembly, homotetramer.

The enzyme catalyses L-glutamine + H2O = L-glutamate + NH4(+). The chain is Glutaminase from Shewanella baltica (strain OS185).